A 20-amino-acid polypeptide reads, in one-letter code: Venom protease (20 aa).

It belongs to the peptidase S1 family. Contains 3 disulfide bonds. Post-translationally, N-glycosylated. As to expression, expressed by the venom duct.

Its subcellular location is the secreted. The chain is Venom protease from Bombus terrestris (Buff-tailed bumblebee).